Here is a 141-residue protein sequence, read N- to C-terminus: Superoxide dismutase [Cu-Zn], chloroplastic (141 aa).

Positions 33, 35, and 50 each coordinate Cu cation. Cysteine 44 and cysteine 133 are disulfide-bonded. Histidine 50, histidine 58, histidine 67, and aspartate 70 together coordinate Zn(2+). Histidine 107 contributes to the Cu cation binding site.

The protein belongs to the Cu-Zn superoxide dismutase family. In terms of assembly, homotetramer. It depends on Cu cation as a cofactor. Zn(2+) serves as cofactor.

The protein localises to the plastid. It is found in the chloroplast. The catalysed reaction is 2 superoxide + 2 H(+) = H2O2 + O2. Its function is as follows. Destroys radicals which are normally produced within the cells and which are toxic to biological systems. This Pinus sylvestris (Scotch pine) protein is Superoxide dismutase [Cu-Zn], chloroplastic (SODCP).